Consider the following 210-residue polypeptide: Vacuolar protein sorting-associated protein 2 homolog 3 (210 aa).

The interval M1–Q23 is disordered. Residues N9 to Q23 are compositionally biased toward basic and acidic residues. Residues I28–G84 are a coiled coil. Residues L178 to D200 form a disordered region.

Belongs to the SNF7 family. Component of the endosomal sorting required for transport complex III (ESCRT-III), composed at least of VPS2, VPS20, VPS24 and VPS32.

The protein localises to the endosome. Functionally, component of the ESCRT-III complex, which is required for multivesicular bodies (MVBs) formation and sorting of endosomal cargo proteins into MVBs. The ESCRT-III complex is probably involved in the concentration of MVB cargo. The sequence is that of Vacuolar protein sorting-associated protein 2 homolog 3 (VPS2.3) from Arabidopsis thaliana (Mouse-ear cress).